The sequence spans 618 residues: DNA mismatch repair protein MutL (618 aa).

Belongs to the DNA mismatch repair MutL/HexB family.

Functionally, this protein is involved in the repair of mismatches in DNA. It is required for dam-dependent methyl-directed DNA mismatch repair. May act as a 'molecular matchmaker', a protein that promotes the formation of a stable complex between two or more DNA-binding proteins in an ATP-dependent manner without itself being part of a final effector complex. In Porphyromonas gingivalis (strain ATCC BAA-308 / W83), this protein is DNA mismatch repair protein MutL.